The sequence spans 217 residues: Adenylate kinase (217 aa).

10 to 15 (GAGKGT) is a binding site for ATP. The NMP stretch occupies residues 30–59 (STGDMLRAQVKAGTALGLEAKKHMDAGGLV). Residues Thr31, Arg36, 57-59 (GLV), 85-88 (GFPR), and Gln92 each bind AMP. An LID region spans residues 122 to 159 (GRRAHLASGRTYHVKFNPPKVEGIDDVTGEPLVQRDDD). ATP contacts are provided by residues Arg123 and 132–133 (TY). Arg156 and Arg167 together coordinate AMP. Gly203 serves as a coordination point for ATP.

This sequence belongs to the adenylate kinase family. As to quaternary structure, monomer.

Its subcellular location is the cytoplasm. The enzyme catalyses AMP + ATP = 2 ADP. It participates in purine metabolism; AMP biosynthesis via salvage pathway; AMP from ADP: step 1/1. In terms of biological role, catalyzes the reversible transfer of the terminal phosphate group between ATP and AMP. Plays an important role in cellular energy homeostasis and in adenine nucleotide metabolism. This Dechloromonas aromatica (strain RCB) protein is Adenylate kinase.